A 463-amino-acid chain; its full sequence is MQMQLNAKTVQGAFKAQRPRSVRGNVAVRAVAAPPKLVTKRSEEIFKEAQELLPGGVNSPVRAFRSVGGGPIVFDRVKGAYCWDVDGNKYIDYVGSWGPAICGHGNDEVNNALKAQIDKGTSFGAPCELENVLAKMVIDRVPSVEMVRFVSSGTEACLSVLRLMRAYTGREKVLKFTGCYHGHADSFLVKAGSGVITLGLPDSPGVPKSTAAATLTATYNNLDSVRELFAANKGEIAGVILEPVVGNSGFIVPTKEFLQGLREICTAEGAVLCFDEVMTGFRIAKGCAQEHFGITPDLTTMGKVIGGGMPVGAYGGKKEIMKMVAPAGPMYQAGTLSGNPMAMTAGIKTLEILGRPGAYEHLEKVTKRLIDGIMAAAKEHSHEITGGNISGMFGFFFCKGPVTCFEDALAADTAKFARFHRGMLEEGVYLAPSQFEAGFTSLAHSEADVDATIAAARRVFARI.

The N-terminal 30 residues, 1–30, are a transit peptide targeting the chloroplast; sequence MQMQLNAKTVQGAFKAQRPRSVRGNVAVRA. Lys-303 is modified (N6-(pyridoxal phosphate)lysine).

This sequence belongs to the class-III pyridoxal-phosphate-dependent aminotransferase family. HemL subfamily. As to quaternary structure, homodimer. The cofactor is pyridoxal 5'-phosphate.

The protein localises to the plastid. The protein resides in the chloroplast. It carries out the reaction (S)-4-amino-5-oxopentanoate = 5-aminolevulinate. It participates in porphyrin-containing compound metabolism; protoporphyrin-IX biosynthesis; 5-aminolevulinate from L-glutamyl-tRNA(Glu): step 2/2. It functions in the pathway porphyrin-containing compound metabolism; chlorophyll biosynthesis. This Chlamydomonas reinhardtii (Chlamydomonas smithii) protein is Glutamate-1-semialdehyde 2,1-aminomutase, chloroplastic (GSA).